A 156-amino-acid polypeptide reads, in one-letter code: Small ribosomal subunit protein uS7 (156 aa).

It belongs to the universal ribosomal protein uS7 family. Part of the 30S ribosomal subunit. Contacts proteins S9 and S11.

Its function is as follows. One of the primary rRNA binding proteins, it binds directly to 16S rRNA where it nucleates assembly of the head domain of the 30S subunit. Is located at the subunit interface close to the decoding center, probably blocks exit of the E-site tRNA. This chain is Small ribosomal subunit protein uS7, found in Moorella thermoacetica (strain ATCC 39073 / JCM 9320).